Consider the following 527-residue polypeptide: Probable bifunctional tRNA threonylcarbamoyladenosine biosynthesis protein (527 aa).

Residues 1–323 (MPDIMPDDGL…YRADEVEVAW (323 aa)) are kae1. Fe cation-binding residues include His-110, His-114, and Tyr-131. L-threonylcarbamoyladenylate-binding positions include 131-135 (YASGA), Asp-163, Gly-176, Glu-180, and Asn-256. A Fe cation-binding site is contributed by Asp-284. The 195-residue stretch at 333-527 (IGPHEGGVAR…HEVELRGRYL (195 aa)) folds into the Protein kinase domain. ATP is bound by residues 340–348 (VARGAEAVV) and Lys-357. The active-site Proton acceptor; for kinase activity is Asp-444.

The protein in the N-terminal section; belongs to the KAE1 / TsaD family. This sequence in the C-terminal section; belongs to the protein kinase superfamily. Tyr protein kinase family. BUD32 subfamily. In terms of assembly, component of the KEOPS complex that consists of Kae1, Bud32, Cgi121 and Pcc1; the whole complex dimerizes. Requires Fe(2+) as cofactor.

Its subcellular location is the cytoplasm. The catalysed reaction is L-seryl-[protein] + ATP = O-phospho-L-seryl-[protein] + ADP + H(+). It carries out the reaction L-threonyl-[protein] + ATP = O-phospho-L-threonyl-[protein] + ADP + H(+). The enzyme catalyses L-threonylcarbamoyladenylate + adenosine(37) in tRNA = N(6)-L-threonylcarbamoyladenosine(37) in tRNA + AMP + H(+). Its function is as follows. Required for the formation of a threonylcarbamoyl group on adenosine at position 37 (t(6)A37) in tRNAs that read codons beginning with adenine. Is a component of the KEOPS complex that is probably involved in the transfer of the threonylcarbamoyl moiety of threonylcarbamoyl-AMP (TC-AMP) to the N6 group of A37. The Kae1 domain likely plays a direct catalytic role in this reaction. The Bud32 domain probably displays kinase activity that regulates Kae1 function. The polypeptide is Probable bifunctional tRNA threonylcarbamoyladenosine biosynthesis protein (Methanoculleus marisnigri (strain ATCC 35101 / DSM 1498 / JR1)).